The following is a 215-amino-acid chain: Vesicle-trafficking protein SEC22b (215 aa).

Residues 1–190 lie on the Cytoplasmic side of the membrane; it reads MVLLTMIARV…RQDAKYLNMR (190 aa). Positions 6–119 constitute a Longin domain; it reads MIARVADGLP…YSFIEFDNYI (114 aa). A v-SNARE coiled-coil homology domain is found at 134–194; that stretch reads NLSSVNTELQ…KYLNMRSTYA (61 aa). The helical transmembrane segment at 191–213 threads the bilayer; that stretch reads STYAKLAAVAVFSVMLIVYIRFW. Topologically, residues 214 to 215 are lumenal; sequence WL.

The protein belongs to the synaptobrevin family. As to quaternary structure, component of 2 distinct SNARE complexes.

Its subcellular location is the endoplasmic reticulum membrane. It is found in the endoplasmic reticulum-Golgi intermediate compartment membrane. It localises to the golgi apparatus. The protein resides in the cis-Golgi network membrane. The protein localises to the trans-Golgi network membrane. Its subcellular location is the melanosome. Functionally, SNARE involved in targeting and fusion of ER-derived transport vesicles with the Golgi complex as well as Golgi-derived retrograde transport vesicles with the ER. The sequence is that of Vesicle-trafficking protein SEC22b from Xenopus tropicalis (Western clawed frog).